The chain runs to 230 residues: Proteasome subunit alpha (230 aa).

The protein belongs to the peptidase T1A family. In terms of assembly, the 20S proteasome core is composed of 14 alpha and 14 beta subunits that assemble into four stacked heptameric rings, resulting in a barrel-shaped structure. The two inner rings, each composed of seven catalytic beta subunits, are sandwiched by two outer rings, each composed of seven alpha subunits. The catalytic chamber with the active sites is on the inside of the barrel. Has a gated structure, the ends of the cylinder being occluded by the N-termini of the alpha-subunits. Is capped by the proteasome-associated ATPase, ARC.

Its subcellular location is the cytoplasm. It functions in the pathway protein degradation; proteasomal Pup-dependent pathway. With respect to regulation, the formation of the proteasomal ATPase ARC-20S proteasome complex, likely via the docking of the C-termini of ARC into the intersubunit pockets in the alpha-rings, may trigger opening of the gate for substrate entry. Interconversion between the open-gate and close-gate conformations leads to a dynamic regulation of the 20S proteasome proteolysis activity. In terms of biological role, component of the proteasome core, a large protease complex with broad specificity involved in protein degradation. The chain is Proteasome subunit alpha from Thermomonospora curvata (strain ATCC 19995 / DSM 43183 / JCM 3096 / KCTC 9072 / NBRC 15933 / NCIMB 10081 / Henssen B9).